We begin with the raw amino-acid sequence, 255 residues long: Carboxy-S-adenosyl-L-methionine synthase (255 aa).

Residues tyrosine 45, 70–72, 124–125, and asparagine 139 each bind S-adenosyl-L-methionine; these read GCS and DI.

The protein belongs to the class I-like SAM-binding methyltransferase superfamily. Cx-SAM synthase family. In terms of assembly, homodimer.

The catalysed reaction is prephenate + S-adenosyl-L-methionine = carboxy-S-adenosyl-L-methionine + 3-phenylpyruvate + H2O. In terms of biological role, catalyzes the conversion of S-adenosyl-L-methionine (SAM) to carboxy-S-adenosyl-L-methionine (Cx-SAM). In Hamiltonella defensa subsp. Acyrthosiphon pisum (strain 5AT), this protein is Carboxy-S-adenosyl-L-methionine synthase.